A 335-amino-acid polypeptide reads, in one-letter code: Taste receptor type 2 member 119 (335 aa).

The Extracellular segment spans residues 1–7 (MMEGHIL). A helical membrane pass occupies residues 8-28 (FFFLVVMVQFVTGVLANGLIV). Residues 29 to 43 (VVHAIDLIMWKKMAP) are Cytoplasmic-facing. A helical transmembrane segment spans residues 44–64 (LDLLLFCLATSRIILQLCILF). Residues 65–81 (AQLCLFSLVRHTLFEDN) are Extracellular-facing. N-linked (GlcNAc...) asparagine glycosylation occurs at N81. Residues 82–102 (ITFVFIINELSLWFATWLGVF) form a helical membrane-spanning segment. Over 103-124 (YCAKIATIPHPLFLWLKMRISR) the chain is Cytoplasmic. A helical transmembrane segment spans residues 125 to 145 (LVPWLILGSVLYVIITTFIHS). Residues 146–176 (RETSAILKPIFISLFPKNATQVGTGHATLLS) are Extracellular-facing. A glycan (N-linked (GlcNAc...) asparagine) is linked at N163. A helical transmembrane segment spans residues 177–197 (VLVLGLTLPLFIFTVAVLLLI). The Cytoplasmic segment spans residues 198 to 224 (YSLWNYSRQMRTMVGTREYSGHAHISA). A helical transmembrane segment spans residues 225 to 245 (MLSILSFLILYLSHYMVAVLI). Residues 246-256 (STQVLYLGSRT) are Extracellular-facing. A helical membrane pass occupies residues 257-277 (FVFCLLVIGMYPSIHSIVLIL). Over 278-335 (GNPKLKRNAKMFIVHCKCCHCTRAWVTSRSPRLSDLPVPPTHPSANKTSCSEACIMPS) the chain is Cytoplasmic. Positions 308–327 (PRLSDLPVPPTHPSANKTSC) are disordered.

This sequence belongs to the G-protein coupled receptor T2R family. Expressed in subsets of taste receptor cells of the tongue and palate epithelium and exclusively in gustducin-positive cells. Expressed in the duodenum, antrum and fundus (part of the stomach).

Its subcellular location is the membrane. In terms of biological role, gustducin-coupled receptor implicated in the perception of bitter compounds in the oral cavity and the gastrointestinal tract. Signals through PLCB2 and the calcium-regulated cation channel TRPM5. The chain is Taste receptor type 2 member 119 (Tas2r119) from Rattus norvegicus (Rat).